The chain runs to 465 residues: Ribulose bisphosphate carboxylase large chain (465 aa).

Position 4 is an N6,N6,N6-trimethyllysine (K4). Residues N113 and T163 each coordinate substrate. K165 acts as the Proton acceptor in catalysis. K167 is a binding site for substrate. Residues K191, D193, and E194 each coordinate Mg(2+). K191 carries the post-translational modification N6-carboxylysine. Residue H284 is the Proton acceptor of the active site. The substrate site is built by R285, H317, and S369.

Belongs to the RuBisCO large chain family. Type I subfamily. In terms of assembly, heterohexadecamer of 8 large chains and 8 small chains; disulfide-linked. The disulfide link is formed within the large subunit homodimers. It depends on Mg(2+) as a cofactor. The disulfide bond which can form in the large chain dimeric partners within the hexadecamer appears to be associated with oxidative stress and protein turnover.

The protein localises to the plastid. It is found in the chloroplast. The enzyme catalyses 2 (2R)-3-phosphoglycerate + 2 H(+) = D-ribulose 1,5-bisphosphate + CO2 + H2O. It carries out the reaction D-ribulose 1,5-bisphosphate + O2 = 2-phosphoglycolate + (2R)-3-phosphoglycerate + 2 H(+). RuBisCO catalyzes two reactions: the carboxylation of D-ribulose 1,5-bisphosphate, the primary event in carbon dioxide fixation, as well as the oxidative fragmentation of the pentose substrate in the photorespiration process. Both reactions occur simultaneously and in competition at the same active site. In Cyrilla racemiflora (Swamp titi), this protein is Ribulose bisphosphate carboxylase large chain.